The following is a 505-amino-acid chain: Endoglucanase 5 (505 aa).

The signal sequence occupies residues 1 to 31 (MWMRRNQIVRKLTLGVVTTVLGMSLSFSALS). Residues 32–334 (ATPVETHGQL…REQIRAGANL (303 aa)) form a catalytic region. Substrate contacts are provided by residues His-64, 68–69 (WF), Tyr-95, and His-130. The active-site Proton donor is Glu-168. Tyr-230 lines the substrate pocket. The Nucleophile role is filled by Glu-256. Residues 262–263 (AS), Trp-290, and 295–297 (KSE) contribute to the substrate site. A disordered region spans residues 332 to 355 (ANLGGGDTPTTPTEPTNPGNGTTG). Residues 335-352 (GGGDTPTTPTEPTNPGNG) are linker. Low complexity predominate over residues 339-355 (TPTTPTEPTNPGNGTTG). One can recognise a CBM3 domain in the interval 353–505 (TTGDVVLQYR…KGTLVWGVEP (153 aa)).

It belongs to the glycosyl hydrolase 5 (cellulase A) family.

It is found in the secreted. The catalysed reaction is Endohydrolysis of (1-&gt;4)-beta-D-glucosidic linkages in cellulose, lichenin and cereal beta-D-glucans.. Functionally, endoglucanase with some exoglucanase activity. This Pectobacterium carotovorum subsp. carotovorum (Erwinia carotovora subsp. carotovora) protein is Endoglucanase 5 (celV).